Here is a 158-residue protein sequence, read N- to C-terminus: Sorbin and SH3 domain-containing protein 2 (158 aa).

The SoHo domain maps to 1-46 (MRAATPLQTVDRPKDWYKTMFKQIHMVHKPDDDTDMYNTPYTYNAG). Residues 28–158 (HKPDDDTDMY…TKPQAGRRKV (131 aa)) form a disordered region. Residues 50–66 (SPYSAQSHPAAKTQTYR) show a composition bias toward polar residues. Residues 71-81 (SHSDNGTDAFK) show a composition bias toward basic and acidic residues. Serine 73 bears the Phosphoserine mark. Positions 86–99 (PVPPPHVPPPVPPL) are enriched in pro residues. Residues 100-136 (RPRDRSSTEKHDWDPPDRKVDTRKFRSEPRSIFEYEP) show a composition bias toward basic and acidic residues. At alanine 153 the chain carries Alanine amide.

As to quaternary structure, interacts with ABL1/c-Abl, ABL2/v-Abl/Arg, ACTN, AKT1, CBL, PALLD and PAK1. Interacts with ABL, CBL, DNM1, DNM2, FLOT1, AFDN, PTK2B/PYK2, SAPAP, SPTAN1, SYNJ1, SYNJ2, VCL/vinculin, and WASF. Interacts with PTPN12 and WASF1 via its SH3 domains; this interaction may mediate the partial PTPN12 and WASF1 translocation to focal adhesion sites. Ubiquitinated by CBL. Post-translationally, dephosphorylated by PTPN12. As to expression, expressed in duodenum.

The protein localises to the cytoplasm. It localises to the perinuclear region. It is found in the apical cell membrane. The protein resides in the cell junction. Its subcellular location is the focal adhesion. The protein localises to the cell projection. It localises to the lamellipodium. Its function is as follows. Adapter protein that plays a role in the assembling of signaling complexes, being a link between ABL kinases and actin cytoskeleton. Can form complex with ABL1 and CBL, thus promoting ubiquitination and degradation of ABL1 or with AKT1 and PAK1, thus mediating AKT1-mediated activation of PAK1. May play a role in the regulation of pancreatic cell adhesion, possibly by acting on WASF1 phosphorylation, enhancing phosphorylation by ABL1, as well as dephosphorylation by PTPN12. Increases water and sodium absorption in the intestine and gall-bladder. The polypeptide is Sorbin and SH3 domain-containing protein 2 (SORBS2) (Sus scrofa (Pig)).